The primary structure comprises 406 residues: Zinc finger protein CONSTANS-LIKE 6 (406 aa).

Positions 17, 20, 40, and 45 each coordinate Zn(2+). Residues 17–59 (CDSCVKRRARWYCAADDAFLCHACDGSVHSANPLARRHERVRL) form a B box-type; atypical zinc finger. Positions 63 to 95 (SAGKYRHASPPHQATWHQGFTRKARTPRGGKKS) are disordered. Residues 82-95 (FTRKARTPRGGKKS) show a composition bias toward basic residues. A CCT domain is found at 357 to 399 (REARVSRYREKRRTRLFSKKIRYEVRKLNAEKRPRMKGRFVKR).

The protein belongs to the CONSTANS family.

It localises to the nucleus. This is Zinc finger protein CONSTANS-LIKE 6 (COL6) from Arabidopsis thaliana (Mouse-ear cress).